Reading from the N-terminus, the 111-residue chain is MPPLSESEFLALAGKELDRIEAAVEAAADAADADIEISRTGNVMELEFENGSKIIINSQAPMQELWVAARSGGFHFRRDGERWVDTRSGDELYAALSAYVSQQAEAALKLG.

It belongs to the frataxin family.

In terms of biological role, involved in iron-sulfur (Fe-S) cluster assembly. May act as a regulator of Fe-S biogenesis. The polypeptide is Iron-sulfur cluster assembly protein CyaY (Cupriavidus pinatubonensis (strain JMP 134 / LMG 1197) (Cupriavidus necator (strain JMP 134))).